The following is a 181-amino-acid chain: Proteinase inhibitor A (181 aa).

The N-terminal stretch at 1–24 is a signal peptide; that stretch reads MAASNALLLISGVLLISLAVLCHG. Disulfide bonds link Cys-67–Cys-113, Cys-134–Cys-143, and Cys-136–Cys-139.

Belongs to the protease inhibitor I3 (leguminous Kunitz-type inhibitor) family.

The protein localises to the secreted. Its function is as follows. Possesses two reactive sites. Inhibits an equimolar amount of trypsin and chymotrypsin simultaneously, and inhibits kallikrein weakly. This Sagittaria sagittifolia (Arrowhead) protein is Proteinase inhibitor A.